A 333-amino-acid polypeptide reads, in one-letter code: HTH-type transcriptional repressor PurR (333 aa).

An HTH lacI-type domain is found at Ala2 to Val56. Positions Ile4 to Asn23 form a DNA-binding region, H-T-H motif. The DNA-binding element occupies Ser48–Val56. The hypoxanthine site is built by Tyr73, Lys189, Thr191, Phe220, and Asp274.

Homodimer.

It participates in purine metabolism; purine nucleotide biosynthesis [regulation]. Is the main repressor of the genes involved in the de novo synthesis of purine nucleotides, regulating purB, purC, purEK, purF, purHD, purL, purMN and guaBA expression. PurR is allosterically activated to bind its cognate DNA by binding the purine corepressors, hypoxanthine or guanine, thereby effecting transcription repression. The protein is HTH-type transcriptional repressor PurR of Histophilus somni (strain 129Pt) (Haemophilus somnus).